Consider the following 85-residue polypeptide: Small ribosomal subunit protein uS17 (85 aa).

Belongs to the universal ribosomal protein uS17 family. As to quaternary structure, part of the 30S ribosomal subunit.

Functionally, one of the primary rRNA binding proteins, it binds specifically to the 5'-end of 16S ribosomal RNA. This is Small ribosomal subunit protein uS17 from Anaeromyxobacter sp. (strain Fw109-5).